The primary structure comprises 209 residues: Vacuolar protein sorting-associated protein 28 homolog 1 (209 aa).

Positions 1-99 (MEVKLWNDKR…TSGVPATVEH (99 aa)) constitute a VPS28 N-terminal domain. The region spanning 109 to 205 (SSASVVAECV…SYNSFMAALP (97 aa)) is the VPS28 C-terminal domain.

The protein belongs to the VPS28 family. In terms of assembly, component of the endosomal sorting required for transport complex I (ESCRT-I), composed of ELC, VPS28 and VPS37. Interacts with ELC.

It localises to the endosome. Functionally, component of the ESCRT-I complex (endosomal sorting complex required for transport I), a regulator of vesicular trafficking process. Required for the sorting of endocytic ubiquitinated cargos into multivesicular bodies (MVBs). Mediates the association to the ESCRT-0 complex. This is Vacuolar protein sorting-associated protein 28 homolog 1 (VPS28-1) from Arabidopsis thaliana (Mouse-ear cress).